Consider the following 246-residue polypeptide: MPASSHQPLDLAKFTLSSPTEIAQHLSNIAKHGHMVTVFANKGKNFILTRLLEVDYQAGVFTFDWGAEEETNTQVLNSERNVFVCSPEGVKTQFVAGQISQVMVDDRPAFQCRLPEQVIKLQRREFFRIQTPLGSPVFCRIGDFNQRSIDLALFDISLGGMSLWLPGIDTPGFDIGQQYLQCSIDLKPFGTLALGIEVRHRLTARMRNGNEAMRIGCSYLNLSAPMETIIQRYVGFLERERRAMVG.

A PilZ domain is found at glutamine 122–valine 234.

This sequence belongs to the YcgR family. In terms of assembly, monomer. Interacts with the flagellar basal bodies.

It is found in the bacterial flagellum basal body. Functionally, acts as a flagellar brake, regulating swimming and swarming in a bis-(3'-5') cyclic diguanylic acid (c-di-GMP)-dependent manner. Binds 1 c-di-GMP dimer per subunit. Increasing levels of c-di-GMP lead to decreased motility. This Chromobacterium violaceum (strain ATCC 12472 / DSM 30191 / JCM 1249 / CCUG 213 / NBRC 12614 / NCIMB 9131 / NCTC 9757 / MK) protein is Flagellar brake protein YcgR.